Reading from the N-terminus, the 305-residue chain is NADH-cytochrome b5 reductase 1 (305 aa).

The helical transmembrane segment at 8–28 (VLLASLGVGLLTLLGVALGAY) threads the bilayer. Residues 44 to 156 (NEKYQLRLLD…RGPSGLLTYA (113 aa)) enclose the FAD-binding FR-type domain. Residues 136 to 166 (DSLK…IQPN) and 175 to 210 (VARN…QCFL) each bind FAD.

This sequence belongs to the flavoprotein pyridine nucleotide cytochrome reductase family. Requires FAD as cofactor.

The protein localises to the membrane. It carries out the reaction 2 Fe(III)-[cytochrome b5] + NADH = 2 Fe(II)-[cytochrome b5] + NAD(+) + H(+). In terms of biological role, NADH-cytochrome b5 reductases are involved in desaturation and elongation of fatty acids, cholesterol biosynthesis, drug metabolism, and, in erythrocyte, methemoglobin reduction. This chain is NADH-cytochrome b5 reductase 1 (CYB5R1), found in Bos taurus (Bovine).